We begin with the raw amino-acid sequence, 805 residues long: Acetyl-CoA decarbonylase/synthase complex subunit alpha 2 (805 aa).

Residues C72, C75, C76, C78, C83, and C93 each contribute to the [4Fe-4S] cluster site. CO is bound at residue H116. Residues H249, C277, and C322 each contribute to the [Ni-4Fe-4S] cluster site. 4Fe-4S ferredoxin-type domains follow at residues 407–435 (EEFK…IPEA) and 445–474 (EYLE…LNVL). Positions 416, 419, 422, 426, 454, 457, 460, and 464 each coordinate [4Fe-4S] cluster. Residues C522, C551, and C586 each coordinate [Ni-4Fe-4S] cluster.

The protein belongs to the Ni-containing carbon monoxide dehydrogenase family. Heterotetramer of two alpha and two epsilon subunits. The ACDS complex is made up of alpha, epsilon, beta, gamma and delta subunits with a probable stoichiometry of (alpha(2)epsilon(2))(4)-beta(8)-(gamma(1)delta(1))(8). [4Fe-4S] cluster is required as a cofactor. It depends on [Ni-4Fe-4S] cluster as a cofactor.

The catalysed reaction is CO + 2 oxidized [2Fe-2S]-[ferredoxin] + H2O = 2 reduced [2Fe-2S]-[ferredoxin] + CO2 + 2 H(+). It participates in one-carbon metabolism; methanogenesis from acetate. Its function is as follows. Part of the ACDS complex that catalyzes the reversible cleavage of acetyl-CoA, allowing growth on acetate as sole source of carbon and energy. The alpha-epsilon subcomponent functions as a carbon monoxide dehydrogenase. The sequence is that of Acetyl-CoA decarbonylase/synthase complex subunit alpha 2 from Methanosarcina acetivorans (strain ATCC 35395 / DSM 2834 / JCM 12185 / C2A).